A 153-amino-acid chain; its full sequence is Aspartate carbamoyltransferase regulatory chain (153 aa).

Positions 109, 114, 138, and 141 each coordinate Zn(2+).

This sequence belongs to the PyrI family. As to quaternary structure, contains catalytic and regulatory chains. It depends on Zn(2+) as a cofactor.

Its function is as follows. Involved in allosteric regulation of aspartate carbamoyltransferase. The sequence is that of Aspartate carbamoyltransferase regulatory chain from Escherichia coli (strain ATCC 8739 / DSM 1576 / NBRC 3972 / NCIMB 8545 / WDCM 00012 / Crooks).